Reading from the N-terminus, the 35-residue chain is Alpha-amanitin proprotein (35 aa).

The propeptide occupies 1 to 10 (MSDINATRLP). At isoleucine 11 the chain carries (3R,4R)-4,5-dihydroxyisoleucine; in form alpha-amanitin. Residue isoleucine 11 is modified to (3R,4S)-4-hydroxyisoleucine; in form gamma-amanitin. The segment at residues 11–18 (IWGIGCNP) is a cross-link (cyclopeptide (Ile-Pro)). Residues 12 to 16 (WGIGC) constitute a cross-link (2'-cysteinyl-6'-hydroxytryptophan sulfoxide (Trp-Cys)). Proline 18 carries the 4-hydroxyproline modification. The propeptide occupies 19–35 (CVGDDVTTLLTRGEALC).

The protein belongs to the MSDIN fungal toxin family. Processed by the macrocyclase-peptidase enzyme POPB to yield a toxic cyclic decapeptide. POPB first removes 10 residues from the N-terminus. Conformational trapping of the remaining peptide forces the enzyme to release this intermediate rather than proceed to macrocyclization. The enzyme rebinds the remaining peptide in a different conformation and catalyzes macrocyclization of the N-terminal 8 residues.

In terms of biological role, major toxin belonging to the bicyclic octapeptides amatoxins that acts by binding non-competitively to RNA polymerase II and greatly slowing the elongation of transcripts from target promoters. The sequence is that of Alpha-amanitin proprotein from Amanita bisporigera (Destroying angel).